The primary structure comprises 506 residues: MEEIQRYLQLDRSQQHDFLYPLIFQEYIYGLAHDQGFNRWILLENPGYDNKSSLLIVKRLITQMYQQNHFLISANDSNQNPFLGRNKNLYPQIISEGFAFIVEIPFSLRLILSLEGKKKKIVKSHNLRSIHSIFPFLEDNFSHLNFVLDILIPHPIHLEILVQTLRYWVKDASSLHLLRFFLHEYCNWNSLITPKKASSSFSKRNQRLFFFLYNSHVCEYESIFVFLRNQSSHLRSTSSRALLERIYFYGKIERLVDVFVKDFQTNLCLFKDPFMHYVRYQGKSILASKGTPLLMNKWKYYLVTFWQCYFSLWFHPRRIYLNQLSNHSLEFVGYLSSVRLNASVVRSQILENSFLINNAIKKFDTLVPIIPLIGSLAKAKFCNVLGYPISKPVRADLSDSDIIDRFGRICRNLSHYHSGSSKKKSLYRIKYILRLSCARTLARKHKSTVRAFLKKLGSELLEEFLMSEEQVLSLTFPKASSTLRGVYRSRIWYLDIICINDLINQK.

Belongs to the intron maturase 2 family. MatK subfamily.

Its subcellular location is the plastid. The protein resides in the chloroplast. Usually encoded in the trnK tRNA gene intron. Probably assists in splicing its own and other chloroplast group II introns. The sequence is that of Maturase K from Olea europaea (Common olive).